The chain runs to 293 residues: MTDSTRSLRNCLAPAKLNLFLHITGRRPNGYHDLQSVFQLLNWGDTLHFTLRDDGRVARVTDVPGVPEESDLVVRAANLLKAHTGTAHGVDIEIDKCLPMGAGLGGGSSDAATTLLALNRLWQLDLPRAELQSLAVKLGADVPFFIFGKNAFAEGIGEELAEVQLPTRWFLVVTPRVHVPTAEIFSDELLTRDSKRVTITDFLAQQNSDAGWPDSFGRNDMQQVVTSKYAEVAQVVKWLYDVTPARMTGSGASVFAAFRSKHEAEAAQAKLPTGWNGAVAESLNEHPLFAFAS.

K16 is a catalytic residue. 99 to 109 contacts ATP; it reads PMGAGLGGGSS. D141 is an active-site residue.

Belongs to the GHMP kinase family. IspE subfamily.

It catalyses the reaction 4-CDP-2-C-methyl-D-erythritol + ATP = 4-CDP-2-C-methyl-D-erythritol 2-phosphate + ADP + H(+). It functions in the pathway isoprenoid biosynthesis; isopentenyl diphosphate biosynthesis via DXP pathway; isopentenyl diphosphate from 1-deoxy-D-xylulose 5-phosphate: step 3/6. Functionally, catalyzes the phosphorylation of the position 2 hydroxy group of 4-diphosphocytidyl-2C-methyl-D-erythritol. This Burkholderia lata (strain ATCC 17760 / DSM 23089 / LMG 22485 / NCIMB 9086 / R18194 / 383) protein is 4-diphosphocytidyl-2-C-methyl-D-erythritol kinase.